The following is a 185-amino-acid chain: Protein GrpE (185 aa).

Polar residues predominate over residues 1–11; sequence MENTQENPTDQ. The tract at residues 1–38 is disordered; sequence MENTQENPTDQTTEETGREAQAAEPAAQAAENAAPAAE. Residues 19–38 are compositionally biased toward low complexity; sequence EAQAAEPAAQAAENAAPAAE.

Belongs to the GrpE family. As to quaternary structure, homodimer.

It localises to the cytoplasm. Participates actively in the response to hyperosmotic and heat shock by preventing the aggregation of stress-denatured proteins, in association with DnaK and GrpE. It is the nucleotide exchange factor for DnaK and may function as a thermosensor. Unfolded proteins bind initially to DnaJ; upon interaction with the DnaJ-bound protein, DnaK hydrolyzes its bound ATP, resulting in the formation of a stable complex. GrpE releases ADP from DnaK; ATP binding to DnaK triggers the release of the substrate protein, thus completing the reaction cycle. Several rounds of ATP-dependent interactions between DnaJ, DnaK and GrpE are required for fully efficient folding. This Burkholderia mallei (strain NCTC 10247) protein is Protein GrpE.